The primary structure comprises 184 residues: ATP-dependent protease subunit HslV (184 aa).

Residue Thr-12 is part of the active site. Positions 166, 169, and 172 each coordinate Na(+).

Belongs to the peptidase T1B family. HslV subfamily. As to quaternary structure, a double ring-shaped homohexamer of HslV is capped on each side by a ring-shaped HslU homohexamer. The assembly of the HslU/HslV complex is dependent on binding of ATP.

Its subcellular location is the cytoplasm. It catalyses the reaction ATP-dependent cleavage of peptide bonds with broad specificity.. With respect to regulation, allosterically activated by HslU binding. Functionally, protease subunit of a proteasome-like degradation complex believed to be a general protein degrading machinery. This is ATP-dependent protease subunit HslV from Brucella melitensis biotype 1 (strain ATCC 23456 / CCUG 17765 / NCTC 10094 / 16M).